Reading from the N-terminus, the 360-residue chain is Glutamate 5-kinase (360 aa).

Residue Lys7 coordinates ATP. Residues Ser47, Asp134, and Asn146 each coordinate substrate. ATP-binding positions include 166 to 167 (TD) and 210 to 216 (TGGISTK). The region spanning 275–356 (VGKITLDDGA…SSIIVVHRDV (82 aa)) is the PUA domain.

It belongs to the glutamate 5-kinase family.

It localises to the cytoplasm. The catalysed reaction is L-glutamate + ATP = L-glutamyl 5-phosphate + ADP. It functions in the pathway amino-acid biosynthesis; L-proline biosynthesis; L-glutamate 5-semialdehyde from L-glutamate: step 1/2. Catalyzes the transfer of a phosphate group to glutamate to form L-glutamate 5-phosphate. The protein is Glutamate 5-kinase of Prochlorococcus marinus (strain MIT 9312).